A 435-amino-acid chain; its full sequence is Exodeoxyribonuclease 7 large subunit (435 aa).

Residues 1–10 are compositionally biased toward polar residues; sequence MRGTRVTETA. Disordered stretches follow at residues 1–21 and 413–435; these read MRGT…GPPT and AGKA…PRGK.

This sequence belongs to the XseA family. Heterooligomer composed of large and small subunits.

It localises to the cytoplasm. The enzyme catalyses Exonucleolytic cleavage in either 5'- to 3'- or 3'- to 5'-direction to yield nucleoside 5'-phosphates.. Functionally, bidirectionally degrades single-stranded DNA into large acid-insoluble oligonucleotides, which are then degraded further into small acid-soluble oligonucleotides. The chain is Exodeoxyribonuclease 7 large subunit from Leifsonia xyli subsp. xyli (strain CTCB07).